The sequence spans 98 residues: PE family immunomodulator PE35 (98 aa).

The PE domain maps to 1–90 (MEKMSHDPIA…DVARTYSQID (90 aa)).

This sequence belongs to the mycobacterial PE family. In terms of assembly, interacts with PPE68. PE35/PPE68 complex interacts with human TLR2.

It localises to the secreted. The protein resides in the cell surface. Plays a major role in RD1-associated pathogenesis, and may contribute to the establishment and maintenance of M.tuberculosis infection. Together with PPE68, stimulates the secretion of IL-10 and MCP-1 from human macrophages, via the interaction with human Toll-like receptor 2 (TLR2). This chain is PE family immunomodulator PE35 (PE35), found in Mycobacterium tuberculosis (strain CDC 1551 / Oshkosh).